Consider the following 348-residue polypeptide: Killer cell immunoglobulin-like receptor 2DL2 (348 aa).

The signal sequence occupies residues 1–21 (MSLMVVSMACVGFFLLQGAWP). Topologically, residues 22-245 (HEGVHRKPSL…SKTGNPRHLH (224 aa)) are extracellular. Ig-like C2-type domains follow at residues 42-107 (EETV…VTHS) and 142-205 (GESV…FRDS). Cystine bridges form between cysteine 49/cysteine 100 and cysteine 149/cysteine 198. 3 N-linked (GlcNAc...) asparagine glycosylation sites follow: asparagine 84, asparagine 178, and asparagine 211. Residues 246–264 (ILIGTSVVIILFILLFFLL) traverse the membrane as a helical segment. Topologically, residues 265–348 (HRWCSNKKNA…ESRSKVVSCP (84 aa)) are cytoplasmic.

Belongs to the immunoglobulin superfamily.

It localises to the cell membrane. Receptor on natural killer (NK) cells for HLA-Cw1, 3, 7, and 8 allotypes. Inhibits the activity of NK cells thus preventing cell lysis. This is Killer cell immunoglobulin-like receptor 2DL2 from Homo sapiens (Human).